The primary structure comprises 327 residues: Asnovolin J 5',6'-dehydrogenase nvfM (327 aa).

Residues 9–29 form a helical membrane-spanning segment; it reads VAIVGASGVTGGSIVNGLLAL. NADP(+)-binding positions include 13-19 and K47; that span reads GASGVTG. K130 functions as the Proton acceptor in the catalytic mechanism.

The protein belongs to the NmrA-type oxidoreductase family.

It is found in the membrane. It carries out the reaction asnovolin K + AH2 = asnovolin A + A. The catalysed reaction is chermesin D methyl ester + AH2 = asnovolin J + A. Its pathway is secondary metabolite biosynthesis; terpenoid biosynthesis. Functionally, asnovolin J 5',6'-dehydrogenase; part of the gene cluster that mediates the biosynthesis of novofumigatonin, a heavily oxygenated meroterpenoid containing a unique orthoester moiety. The first step of the pathway is the synthesis of 3,5-dimethylorsellinic acid (DMOA) by the polyketide synthase nvfA via condensation of one acetyl-CoA starter unit with 3 malonyl-CoA units and 2 methylations. DMOA is then converted to farnesyl-DMOA by the farnesyltransferase nvfB. Epoxydation by FAD-dependent monooxygenase nvfK, followed by a protonation-initiated cyclization catalyzed by the terpene cyclase nvfL leads to the production of asnavolin H. The short chain dehydrogenase nvfC then as a 3-OH dehydrogenase of asnovolin H to yield chemesin D. There are two branches to synthesize asnovolin A from chemesin D. In one branch, chemesin D undergoes Baeyer-Villiger oxidation by nvfH, methylation by nvfJ, and enoyl reduction by the nvfM D enoylreductase that reduces the double bond between C-5'and C-6', to form respectively asnovolin I, asnovolin K, and asnovolin A. In the other branch, the methylation precedes the Baeyer-Villiger oxidation and the enoyl reduction to yield asnovolin A via the asnovolin J intermediate. Asnovolin A is further converted to fumigatonoid A by the Fe(II)/2-oxoglutarate-dependent dioxygenase nvfI that catalyzes an endoperoxidation reaction. The alpha/beta hydrolase nvfD then acts as an epimerase that converts fumigatonoid A to its C-5' epimer, which then undergoes spontaneous or nvfD-catalyzed lactonization. The following step utilizes the ketoreductase nvfG to produce fumigatonoid B. The dioxygenase nvfE further converts fumigatonoid B into fumigatonoid C. Finally the Fe(II)/2-oxoglutarate-dependent dioxygenase nvfF catalyzes two rounds of oxidation to transform fumigatonoid C into the end product, novofumigatonin A. This is Asnovolin J 5',6'-dehydrogenase nvfM from Aspergillus novofumigatus (strain IBT 16806).